The chain runs to 100 residues: Urease subunit gamma (100 aa).

The protein belongs to the urease gamma subunit family. In terms of assembly, heterotrimer of UreA (gamma), UreB (beta) and UreC (alpha) subunits. Three heterotrimers associate to form the active enzyme.

It is found in the cytoplasm. The enzyme catalyses urea + 2 H2O + H(+) = hydrogencarbonate + 2 NH4(+). It functions in the pathway nitrogen metabolism; urea degradation; CO(2) and NH(3) from urea (urease route): step 1/1. The polypeptide is Urease subunit gamma (Haemophilus influenzae (strain PittGG)).